Here is a 404-residue protein sequence, read N- to C-terminus: Serine/threonine transporter SstT (404 aa).

8 helical membrane-spanning segments follow: residues I17 to F37, I39 to L59, M75 to L95, A138 to L158, I179 to I199, F212 to I232, I287 to L307, and F313 to A333.

Belongs to the dicarboxylate/amino acid:cation symporter (DAACS) (TC 2.A.23) family.

It is found in the cell membrane. The enzyme catalyses L-serine(in) + Na(+)(in) = L-serine(out) + Na(+)(out). The catalysed reaction is L-threonine(in) + Na(+)(in) = L-threonine(out) + Na(+)(out). Involved in the import of serine and threonine into the cell, with the concomitant import of sodium (symport system). This chain is Serine/threonine transporter SstT, found in Streptococcus pyogenes serotype M5 (strain Manfredo).